A 208-amino-acid polypeptide reads, in one-letter code: RxLR effector protein Avr1 (208 aa).

A signal peptide spans 1 to 22 (MGLMHRVLLLATFALLCMHAKA). Residues 41 to 54 (RQLRTATMSDDEAR) carry the RxLR-dEER motif. A W1-motif region spans residues 70–92 (KIESWIQNKVTDDFVLSELKLVR). The segment at 93–110 (LPGTSLADDPNFKLFQKF) is linker region ln1. Residues 111-136 (KIGGWLEEKATTTKAWENLGLDSLPF) form a W2-motif region. The interval 137–157 (DQVSKIDEFKTYTQYVTVLNK) is Y-motif. Positions 158 to 170 (KASKLDIDQWHGL) are linker region ln2. The tract at residues 170-208 (LLSGGSPEELMAKAMILRTLGRDVLERRVMLGGHVVVPF) is T-region.

It belongs to the RxLR effector family. In terms of assembly, interacts with host exocyst component Sec5.

The protein localises to the secreted. The protein resides in the host cytoplasm. Its subcellular location is the host nucleus. It is found in the host peroxisome. Secreted effector that acts as an elicitor of hypersensitive response (HR) specifically on plants carrying defense protein R1, through its interaction with this protein. Also acts as a virulence factor that promotes colonization and suppresses cell death induced by CRN2 as well as callose deposition, a hallmark of basal defense. Interacts with host exocyst component Sec5 and thereby disturbs vesicle trafficking, a cellular process that is important for basal defense. By targeting and stabilizing Sec5 in the cytoplasm, the exocyst complex is thus out of balance and not able to mediate the focal secretion of PR-1 and callose. In Phytophthora infestans (strain T30-4) (Potato late blight agent), this protein is RxLR effector protein Avr1.